A 1058-amino-acid chain; its full sequence is Carbamoyl phosphate synthase large chain (1058 aa).

Residues 1–401 (MPKRTDIKKI…SLLKACRSLE (401 aa)) form a carboxyphosphate synthetic domain region. 12 residues coordinate ATP: R129, R169, G175, G176, K208, I210, E215, G241, I242, H243, Q284, and E298. The ATP-grasp 1 domain occupies 133–327 (KALMKALKQP…IAKIAAKIAI (195 aa)). Mg(2+)-binding residues include Q284, E298, and N300. Positions 284, 298, and 300 each coordinate Mn(2+). Positions 402-546 (IGIYHNECKE…YSTYAFENES (145 aa)) are oligomerization domain. The segment at 547–929 (QASPNKSILV…ALYKAFEASY (383 aa)) is carbamoyl phosphate synthetic domain. The ATP-grasp 2 domain maps to 671 to 861 (EKALHDINIP…MAQVATKLIL (191 aa)). ATP contacts are provided by R707, S746, I748, E752, G777, V778, H779, S780, Q820, and E832. Positions 820, 832, and 834 each coordinate Mg(2+). Q820, E832, and N834 together coordinate Mn(2+). In terms of domain architecture, MGS-like spans 930-1058 (MHVPDFGNII…ESRSFSIQSL (129 aa)). The interval 930-1058 (MHVPDFGNII…ESRSFSIQSL (129 aa)) is allosteric domain.

The protein belongs to the CarB family. As to quaternary structure, composed of two chains; the small (or glutamine) chain promotes the hydrolysis of glutamine to ammonia, which is used by the large (or ammonia) chain to synthesize carbamoyl phosphate. Tetramer of heterodimers (alpha,beta)4. Mg(2+) serves as cofactor. The cofactor is Mn(2+).

It catalyses the reaction hydrogencarbonate + L-glutamine + 2 ATP + H2O = carbamoyl phosphate + L-glutamate + 2 ADP + phosphate + 2 H(+). It carries out the reaction hydrogencarbonate + NH4(+) + 2 ATP = carbamoyl phosphate + 2 ADP + phosphate + 2 H(+). It functions in the pathway amino-acid biosynthesis; L-arginine biosynthesis; carbamoyl phosphate from bicarbonate: step 1/1. The protein operates within pyrimidine metabolism; UMP biosynthesis via de novo pathway; (S)-dihydroorotate from bicarbonate: step 1/3. In terms of biological role, large subunit of the glutamine-dependent carbamoyl phosphate synthetase (CPSase). CPSase catalyzes the formation of carbamoyl phosphate from the ammonia moiety of glutamine, carbonate, and phosphate donated by ATP, constituting the first step of 2 biosynthetic pathways, one leading to arginine and/or urea and the other to pyrimidine nucleotides. The large subunit (synthetase) binds the substrates ammonia (free or transferred from glutamine from the small subunit), hydrogencarbonate and ATP and carries out an ATP-coupled ligase reaction, activating hydrogencarbonate by forming carboxy phosphate which reacts with ammonia to form carbamoyl phosphate. The protein is Carbamoyl phosphate synthase large chain of Streptococcus uberis (strain ATCC BAA-854 / 0140J).